Here is a 323-residue protein sequence, read N- to C-terminus: NADH-ubiquinone oxidoreductase chain 1 (323 aa).

8 helical membrane-spanning segments follow: residues 8–28 (VINP…LTLL), 74–94 (FLFL…WAPM), 105–125 (LGVL…LGSG), 145–165 (ISYE…TGGF), 176–196 (SIWL…STLA), 236–256 (ILLM…IPAF), 258–278 (ELTA…FLWV), and 298–318 (FLPL…ALAG).

It belongs to the complex I subunit 1 family.

The protein localises to the mitochondrion inner membrane. The enzyme catalyses a ubiquinone + NADH + 5 H(+)(in) = a ubiquinol + NAD(+) + 4 H(+)(out). In terms of biological role, core subunit of the mitochondrial membrane respiratory chain NADH dehydrogenase (Complex I) that is believed to belong to the minimal assembly required for catalysis. Complex I functions in the transfer of electrons from NADH to the respiratory chain. The immediate electron acceptor for the enzyme is believed to be ubiquinone. This chain is NADH-ubiquinone oxidoreductase chain 1 (MT-ND1), found in Oncorhynchus mykiss (Rainbow trout).